We begin with the raw amino-acid sequence, 400 residues long: Enoyl-[acyl-carrier-protein] reductase [NADH] 2 (400 aa).

NAD(+) is bound by residues 48 to 53 (GASSGF), 75 to 76 (FE), 112 to 113 (DA), and 141 to 142 (LA). Tyrosine 228 contributes to the substrate binding site. Catalysis depends on tyrosine 238, which acts as the Proton donor. NAD(+) contacts are provided by residues lysine 247 and 276-278 (LVT).

This sequence belongs to the TER reductase family. As to quaternary structure, monomer.

It catalyses the reaction a 2,3-saturated acyl-[ACP] + NAD(+) = a (2E)-enoyl-[ACP] + NADH + H(+). It participates in lipid metabolism; fatty acid biosynthesis. In terms of biological role, involved in the final reduction of the elongation cycle of fatty acid synthesis (FAS II). Catalyzes the reduction of a carbon-carbon double bond in an enoyl moiety that is covalently linked to an acyl carrier protein (ACP). The sequence is that of Enoyl-[acyl-carrier-protein] reductase [NADH] 2 from Vibrio vulnificus (strain YJ016).